The primary structure comprises 1085 residues: Aminopeptidase N (1085 aa).

The segment at residues 1-30 (MKLTKGCAYKYIIFTVLILANILYDNKKRC) is a signal peptide (required for ER targeting and membrane association; not cleaved). A sufficient for targeting to the food vacuole region spans residues 1–200 (MKLTKGCAYK…VKKNEPKIHY (200 aa)). The tract at residues 108-130 (EKGDNNNNNHQNNNGNDNKKRLG) is disordered. A compositionally biased stretch (low complexity) spans 112–123 (NNNNNHQNNNGN). Residues Glu319, Gly460, Ala461, and Glu463 each coordinate a peptide. His496 lines the Zn(2+) pocket. The active-site Proton acceptor is Glu497. His500 and Glu519 together coordinate Zn(2+).

This sequence belongs to the peptidase M1 family. As to quaternary structure, heterodimer of the p68 form and the p35 form which are derived from the p120 precursor. Requires Zn(2+) as cofactor. The full length protein appears to be cleaved into a 120 kDa precursor. This precursor is then proteolytically cleaved at the N-terminus generating a 96 kDa form which is further processed at the C-terminus into 68 kDa and 35 kDa forms that remain associated.

Its subcellular location is the parasitophorous vacuole membrane. The protein localises to the nucleus. It localises to the cytoplasm. It is found in the vacuole lumen. With respect to regulation, inhibited by 1,10-phenanthroline, EDTA and bestatin. Inhibited by (Benzyl)Tyr-Ala (BTA). Activity is not affected by phosphoramidin, PMSF, leupeptin, iodoacetamide or pepstatin. In terms of biological role, displays aminopeptidase activity with a broad substrate specificity. Preferentially, cleaves after Leu and Met, but also cleaves after Ala and Arg. Low activity towards Lys, Phe, Tyr, Trp, Gln, Ser and Gly and negligible activity towards Glu, Asp, Pro, Ile, Thr, Val, His and Asn. Has dipeptidase activity. Plays a role in the terminal stages of host hemoglobin digestion by cleaving the N-terminal residue of small hemoglobin-derived oligopeptides. The sequence is that of Aminopeptidase N from Plasmodium falciparum (isolate 3D7).